The sequence spans 157 residues: Ribosome maturation factor RimP (157 aa).

It belongs to the RimP family.

The protein resides in the cytoplasm. Its function is as follows. Required for maturation of 30S ribosomal subunits. This chain is Ribosome maturation factor RimP, found in Geobacillus sp. (strain WCH70).